Here is a 236-residue protein sequence, read N- to C-terminus: Biosynthetic peptidoglycan transglycosylase (236 aa).

The chain crosses the membrane as a helical span at residues 12-31 (ALFWFAAGSIVLVLVFRWVP).

It belongs to the glycosyltransferase 51 family.

The protein resides in the cell inner membrane. It catalyses the reaction [GlcNAc-(1-&gt;4)-Mur2Ac(oyl-L-Ala-gamma-D-Glu-L-Lys-D-Ala-D-Ala)](n)-di-trans,octa-cis-undecaprenyl diphosphate + beta-D-GlcNAc-(1-&gt;4)-Mur2Ac(oyl-L-Ala-gamma-D-Glu-L-Lys-D-Ala-D-Ala)-di-trans,octa-cis-undecaprenyl diphosphate = [GlcNAc-(1-&gt;4)-Mur2Ac(oyl-L-Ala-gamma-D-Glu-L-Lys-D-Ala-D-Ala)](n+1)-di-trans,octa-cis-undecaprenyl diphosphate + di-trans,octa-cis-undecaprenyl diphosphate + H(+). Its pathway is cell wall biogenesis; peptidoglycan biosynthesis. In terms of biological role, peptidoglycan polymerase that catalyzes glycan chain elongation from lipid-linked precursors. This chain is Biosynthetic peptidoglycan transglycosylase, found in Pseudomonas putida (strain W619).